Consider the following 429-residue polypeptide: Probable M18 family aminopeptidase 2 (429 aa).

Zn(2+) contacts are provided by His-82, His-156, and His-401.

The protein belongs to the peptidase M18 family. The cofactor is Zn(2+).

This is Probable M18 family aminopeptidase 2 from Azotobacter vinelandii (strain DJ / ATCC BAA-1303).